A 102-amino-acid polypeptide reads, in one-letter code: Small ribosomal subunit protein eS24 (102 aa).

This sequence belongs to the eukaryotic ribosomal protein eS24 family.

The chain is Small ribosomal subunit protein eS24 from Methanococcus maripaludis (strain C7 / ATCC BAA-1331).